A 173-amino-acid chain; its full sequence is ATP synthase subunit b (173 aa).

Residues 15 to 35 (GVEWGTVIVQVLTFIVLLALL) traverse the membrane as a helical segment.

The protein belongs to the ATPase B chain family. As to quaternary structure, F-type ATPases have 2 components, F(1) - the catalytic core - and F(0) - the membrane proton channel. F(1) has five subunits: alpha(3), beta(3), gamma(1), delta(1), epsilon(1). F(0) has three main subunits: a(1), b(2) and c(10-14). The alpha and beta chains form an alternating ring which encloses part of the gamma chain. F(1) is attached to F(0) by a central stalk formed by the gamma and epsilon chains, while a peripheral stalk is formed by the delta and b chains.

It localises to the cell membrane. Functionally, f(1)F(0) ATP synthase produces ATP from ADP in the presence of a proton or sodium gradient. F-type ATPases consist of two structural domains, F(1) containing the extramembraneous catalytic core and F(0) containing the membrane proton channel, linked together by a central stalk and a peripheral stalk. During catalysis, ATP synthesis in the catalytic domain of F(1) is coupled via a rotary mechanism of the central stalk subunits to proton translocation. Its function is as follows. Component of the F(0) channel, it forms part of the peripheral stalk, linking F(1) to F(0). This chain is ATP synthase subunit b, found in Staphylococcus aureus (strain MSSA476).